Reading from the N-terminus, the 290-residue chain is 4-diphosphocytidyl-2-C-methyl-D-erythritol kinase (290 aa).

K8 is an active-site residue. 92 to 102 (PISAGLAGGST) serves as a coordination point for ATP. The active site involves D134.

Belongs to the GHMP kinase family. IspE subfamily.

It carries out the reaction 4-CDP-2-C-methyl-D-erythritol + ATP = 4-CDP-2-C-methyl-D-erythritol 2-phosphate + ADP + H(+). It participates in isoprenoid biosynthesis; isopentenyl diphosphate biosynthesis via DXP pathway; isopentenyl diphosphate from 1-deoxy-D-xylulose 5-phosphate: step 3/6. Functionally, catalyzes the phosphorylation of the position 2 hydroxy group of 4-diphosphocytidyl-2C-methyl-D-erythritol. The protein is 4-diphosphocytidyl-2-C-methyl-D-erythritol kinase of Caldicellulosiruptor saccharolyticus (strain ATCC 43494 / DSM 8903 / Tp8T 6331).